The sequence spans 465 residues: Na(+)-translocating NADH-quinone reductase subunit A (465 aa).

Belongs to the NqrA family. In terms of assembly, composed of six subunits; NqrA, NqrB, NqrC, NqrD, NqrE and NqrF.

It catalyses the reaction a ubiquinone + n Na(+)(in) + NADH + H(+) = a ubiquinol + n Na(+)(out) + NAD(+). Functionally, NQR complex catalyzes the reduction of ubiquinone-1 to ubiquinol by two successive reactions, coupled with the transport of Na(+) ions from the cytoplasm to the periplasm. NqrA to NqrE are probably involved in the second step, the conversion of ubisemiquinone to ubiquinol. The sequence is that of Na(+)-translocating NADH-quinone reductase subunit A from Chlamydia muridarum (strain MoPn / Nigg).